Here is a 377-residue protein sequence, read N- to C-terminus: Succinyl-diaminopimelate desuccinylase (377 aa).

Residue His-68 coordinates Zn(2+). Asp-70 is a catalytic residue. Residue Asp-101 participates in Zn(2+) binding. Residue Glu-135 is the Proton acceptor of the active site. 3 residues coordinate Zn(2+): Glu-136, Glu-164, and His-350.

Belongs to the peptidase M20A family. DapE subfamily. In terms of assembly, homodimer. Zn(2+) is required as a cofactor. It depends on Co(2+) as a cofactor.

The enzyme catalyses N-succinyl-(2S,6S)-2,6-diaminopimelate + H2O = (2S,6S)-2,6-diaminopimelate + succinate. It functions in the pathway amino-acid biosynthesis; L-lysine biosynthesis via DAP pathway; LL-2,6-diaminopimelate from (S)-tetrahydrodipicolinate (succinylase route): step 3/3. In terms of biological role, catalyzes the hydrolysis of N-succinyl-L,L-diaminopimelic acid (SDAP), forming succinate and LL-2,6-diaminopimelate (DAP), an intermediate involved in the bacterial biosynthesis of lysine and meso-diaminopimelic acid, an essential component of bacterial cell walls. This Aliivibrio fischeri (strain ATCC 700601 / ES114) (Vibrio fischeri) protein is Succinyl-diaminopimelate desuccinylase.